Here is a 497-residue protein sequence, read N- to C-terminus: Zinc finger CCCH domain-containing protein 22 (497 aa).

The C3H1-type zinc-finger motif lies at 136–163; sequence SESMMICKFFMQQRCRFGSSCRSSHGLD. Positions 236 to 281 are disordered; it reads AQMTDDDGEEEEEEDEQQSASDSEDSVSSDYDEGSPQGIGFLESTN. Residues 239 to 268 show a composition bias toward acidic residues; that stretch reads TDDDGEEEEEEDEQQSASDSEDSVSSDYDE. Residues 300-346 form the G-patch domain; that stretch reads TRGIASKMMASMGYREGMGLGVSGQGILNPILVKVLPAKRSLDYALE. The interval 352–387 is disordered; the sequence is ECKSEKQKKKRSRGGKRKRGKKFAEAAKAAKQEEES. Residues 357-372 show a composition bias toward basic residues; sequence KQKKKRSRGGKRKRGK. Positions 373 to 387 are enriched in basic and acidic residues; it reads KFAEAAKAAKQEEES.

This Arabidopsis thaliana (Mouse-ear cress) protein is Zinc finger CCCH domain-containing protein 22.